A 292-amino-acid chain; its full sequence is tRNA pseudouridine synthase B (292 aa).

Aspartate 40 serves as the catalytic Nucleophile.

This sequence belongs to the pseudouridine synthase TruB family. Type 1 subfamily.

It carries out the reaction uridine(55) in tRNA = pseudouridine(55) in tRNA. In terms of biological role, responsible for synthesis of pseudouridine from uracil-55 in the psi GC loop of transfer RNAs. The sequence is that of tRNA pseudouridine synthase B from Mycoplasma capricolum subsp. capricolum (strain California kid / ATCC 27343 / NCTC 10154).